The chain runs to 124 residues: Large ribosomal subunit protein uL18 (124 aa).

It belongs to the universal ribosomal protein uL18 family. Part of the 50S ribosomal subunit; part of the 5S rRNA/L5/L18/L25 subcomplex. Contacts the 5S and 23S rRNAs.

This is one of the proteins that bind and probably mediate the attachment of the 5S RNA into the large ribosomal subunit, where it forms part of the central protuberance. The protein is Large ribosomal subunit protein uL18 of Aquifex pyrophilus.